A 447-amino-acid chain; its full sequence is Blue-light photoreceptor PHR2 (447 aa).

Residues 1–14 are compositionally biased toward polar residues; the sequence is MDSSNVEENLNPET. The segment at 1–20 is disordered; sequence MDSSNVEENLNPETKSAEEQ. The Photolyase/cryptochrome alpha/beta domain maps to 115 to 249; sequence RAAVVWFRND…EVKYFWGSTL (135 aa).

Belongs to the DNA photolyase class-1 family. It depends on FAD as a cofactor.

This Arabidopsis thaliana (Mouse-ear cress) protein is Blue-light photoreceptor PHR2 (PHR2).